We begin with the raw amino-acid sequence, 28 residues long: N-acetyl-D-galactosamine-binding lectin subunit A (28 aa).

It belongs to the ribosome-inactivating protein family. As to quaternary structure, disulfide-linked heterodimer of A and B chains.

It catalyses the reaction Endohydrolysis of the N-glycosidic bond at one specific adenosine on the 28S rRNA.. Gal / GalNAc-specific lectin. Agglutinates both native and trypsin-treated rabbit erythrocytes but not human erythrocytes irrespective of blood group type. The sequence is that of N-acetyl-D-galactosamine-binding lectin subunit A from Iris hollandica (Dutch iris).